The primary structure comprises 448 residues: Probable D-serine dehydratase (448 aa).

At lysine 119 the chain carries N6-(pyridoxal phosphate)lysine.

Belongs to the serine/threonine dehydratase family. DsdA subfamily. Pyridoxal 5'-phosphate is required as a cofactor.

The enzyme catalyses D-serine = pyruvate + NH4(+). The polypeptide is Probable D-serine dehydratase (Chromobacterium violaceum (strain ATCC 12472 / DSM 30191 / JCM 1249 / CCUG 213 / NBRC 12614 / NCIMB 9131 / NCTC 9757 / MK)).